Consider the following 336-residue polypeptide: Glyceraldehyde-3-phosphate dehydrogenase (336 aa).

NAD(+) is bound by residues R12–I13, D34, R78, and T121. D-glyceraldehyde 3-phosphate contacts are provided by residues S151–T153, T182, R199, T212–G213, and R235. The Nucleophile role is filled by C152. N316 provides a ligand contact to NAD(+).

This sequence belongs to the glyceraldehyde-3-phosphate dehydrogenase family. In terms of assembly, homotetramer.

It is found in the cytoplasm. It carries out the reaction D-glyceraldehyde 3-phosphate + phosphate + NAD(+) = (2R)-3-phospho-glyceroyl phosphate + NADH + H(+). It functions in the pathway carbohydrate degradation; glycolysis; pyruvate from D-glyceraldehyde 3-phosphate: step 1/5. Functionally, catalyzes the oxidative phosphorylation of glyceraldehyde 3-phosphate (G3P) to 1,3-bisphosphoglycerate (BPG) using the cofactor NAD. The first reaction step involves the formation of a hemiacetal intermediate between G3P and a cysteine residue, and this hemiacetal intermediate is then oxidized to a thioester, with concomitant reduction of NAD to NADH. The reduced NADH is then exchanged with the second NAD, and the thioester is attacked by a nucleophilic inorganic phosphate to produce BPG. This Streptococcus dysgalactiae subsp. equisimilis (Streptococcus equisimilis) protein is Glyceraldehyde-3-phosphate dehydrogenase (gap).